The primary structure comprises 338 residues: Phenylalanine--tRNA ligase alpha subunit (338 aa).

Glu-252 serves as a coordination point for Mg(2+).

This sequence belongs to the class-II aminoacyl-tRNA synthetase family. Phe-tRNA synthetase alpha subunit type 1 subfamily. In terms of assembly, tetramer of two alpha and two beta subunits. Mg(2+) serves as cofactor.

The protein resides in the cytoplasm. The enzyme catalyses tRNA(Phe) + L-phenylalanine + ATP = L-phenylalanyl-tRNA(Phe) + AMP + diphosphate + H(+). The polypeptide is Phenylalanine--tRNA ligase alpha subunit (Azotobacter vinelandii (strain DJ / ATCC BAA-1303)).